We begin with the raw amino-acid sequence, 276 residues long: Diaminopimelate epimerase (276 aa).

Positions 13, 46, and 66 each coordinate substrate. Cys75 serves as the catalytic Proton donor. Substrate contacts are provided by residues 76–77 (GN), Asn159, Asn192, and 210–211 (ER). Residue Cys219 is the Proton acceptor of the active site. A substrate-binding site is contributed by 220–221 (GS).

It belongs to the diaminopimelate epimerase family. In terms of assembly, homodimer.

The protein resides in the cytoplasm. The enzyme catalyses (2S,6S)-2,6-diaminopimelate = meso-2,6-diaminopimelate. It functions in the pathway amino-acid biosynthesis; L-lysine biosynthesis via DAP pathway; DL-2,6-diaminopimelate from LL-2,6-diaminopimelate: step 1/1. In terms of biological role, catalyzes the stereoinversion of LL-2,6-diaminopimelate (L,L-DAP) to meso-diaminopimelate (meso-DAP), a precursor of L-lysine and an essential component of the bacterial peptidoglycan. This is Diaminopimelate epimerase from Vibrio vulnificus (strain CMCP6).